Consider the following 365-residue polypeptide: uncharacterized protein (365 aa).

6 consecutive transmembrane segments (helical) span residues 3–23 (MDTSKVILIVAIIIWIILYSI), 60–80 (IGIISIPICVILGFFMLLNII), 100–120 (VFLFGDVIPWIPGIIALLIAI), 141–161 (SGILLLLGLPLGAFVELGDEF), 171–191 (AIASAGPLANLIIFLTSIPLL), and 280–300 (TALFINTIYWTYWFNFLLALF).

To S.solfataricus C04034.

The protein localises to the cell membrane. This is an uncharacterized protein from Methanocaldococcus jannaschii (strain ATCC 43067 / DSM 2661 / JAL-1 / JCM 10045 / NBRC 100440) (Methanococcus jannaschii).